The chain runs to 795 residues: Lon protease (795 aa).

The 193-residue stretch at 11-203 (GRVIPVSDIV…KFIDYLLKQK (193 aa)) folds into the Lon N-terminal domain. 356–363 (GPPGVGKT) lines the ATP pocket. A Lon proteolytic domain is found at 593–771 (DNVPGVVTGL…EDVLRETLGI (179 aa)). Active-site residues include serine 677 and lysine 720.

It belongs to the peptidase S16 family. As to quaternary structure, homohexamer. Organized in a ring with a central cavity.

It localises to the cytoplasm. The enzyme catalyses Hydrolysis of proteins in presence of ATP.. Functionally, ATP-dependent serine protease that mediates the selective degradation of mutant and abnormal proteins as well as certain short-lived regulatory proteins. Required for cellular homeostasis and for survival from DNA damage and developmental changes induced by stress. Degrades polypeptides processively to yield small peptide fragments that are 5 to 10 amino acids long. Binds to DNA in a double-stranded, site-specific manner. This Clostridium beijerinckii (strain ATCC 51743 / NCIMB 8052) (Clostridium acetobutylicum) protein is Lon protease.